A 26-amino-acid chain; its full sequence is AMP deaminase 1 (26 aa).

The protein belongs to the metallo-dependent hydrolases superfamily. Adenosine and AMP deaminases family. Homotetramer. Zn(2+) is required as a cofactor.

The catalysed reaction is AMP + H2O + H(+) = IMP + NH4(+). Its pathway is purine metabolism; IMP biosynthesis via salvage pathway; IMP from AMP: step 1/1. Functionally, AMP deaminase plays a critical role in energy metabolism. The polypeptide is AMP deaminase 1 (AMPD1) (Oryctolagus cuniculus (Rabbit)).